The primary structure comprises 269 residues: Hydroxyethylthiazole kinase (269 aa).

Substrate is bound at residue Met-46. Residues Arg-121 and Thr-166 each contribute to the ATP site. Gly-193 lines the substrate pocket.

This sequence belongs to the Thz kinase family. Requires Mg(2+) as cofactor.

The catalysed reaction is 5-(2-hydroxyethyl)-4-methylthiazole + ATP = 4-methyl-5-(2-phosphooxyethyl)-thiazole + ADP + H(+). Its pathway is cofactor biosynthesis; thiamine diphosphate biosynthesis; 4-methyl-5-(2-phosphoethyl)-thiazole from 5-(2-hydroxyethyl)-4-methylthiazole: step 1/1. In terms of biological role, catalyzes the phosphorylation of the hydroxyl group of 4-methyl-5-beta-hydroxyethylthiazole (THZ). The polypeptide is Hydroxyethylthiazole kinase (Limosilactobacillus reuteri (strain DSM 20016) (Lactobacillus reuteri)).